Consider the following 95-residue polypeptide: Aspartyl/glutamyl-tRNA(Asn/Gln) amidotransferase subunit C (95 aa).

Belongs to the GatC family. In terms of assembly, heterotrimer of A, B and C subunits.

The enzyme catalyses L-glutamyl-tRNA(Gln) + L-glutamine + ATP + H2O = L-glutaminyl-tRNA(Gln) + L-glutamate + ADP + phosphate + H(+). The catalysed reaction is L-aspartyl-tRNA(Asn) + L-glutamine + ATP + H2O = L-asparaginyl-tRNA(Asn) + L-glutamate + ADP + phosphate + 2 H(+). In terms of biological role, allows the formation of correctly charged Asn-tRNA(Asn) or Gln-tRNA(Gln) through the transamidation of misacylated Asp-tRNA(Asn) or Glu-tRNA(Gln) in organisms which lack either or both of asparaginyl-tRNA or glutaminyl-tRNA synthetases. The reaction takes place in the presence of glutamine and ATP through an activated phospho-Asp-tRNA(Asn) or phospho-Glu-tRNA(Gln). The protein is Aspartyl/glutamyl-tRNA(Asn/Gln) amidotransferase subunit C of Pelagibacter ubique (strain HTCC1062).